Reading from the N-terminus, the 386-residue chain is Alkanesulfonate monooxygenase (386 aa).

It belongs to the SsuD family.

The catalysed reaction is an alkanesulfonate + FMNH2 + O2 = an aldehyde + FMN + sulfite + H2O + 2 H(+). In terms of biological role, catalyzes the desulfonation of aliphatic sulfonates. This Paraburkholderia phytofirmans (strain DSM 17436 / LMG 22146 / PsJN) (Burkholderia phytofirmans) protein is Alkanesulfonate monooxygenase.